The sequence spans 337 residues: MAKVKIGINGFGRIGRLVARVALVRDDVELVAVNDPFITVDYMAYMFKYDTVHGQYKHHELKVKDEKTLLFGDKPVAVFGLRNPEEIPWAETGAEYVVESTGVFTEKEKAAAHLKGGAKKVIISAPSKDAPMFVVGVNEKTYTPDIDVVSNASCTTNCLAPLAKVIHDRFGIVEGLMTTVHSITATQKTVDGPSSKDWRGGRAASFNIIPSSTGAAKAVGKVLPDLNGKLTGMAFRVPTVDVSVVDLTVTLAKEASYDEIKAAIKEESEGKLKGILGYTEEDVVSSDFVGDSRSSIFDAKAGIALSKKFVKIVAWYDNEWGYSSRVVDLIRHMAAAK.

Residues 13–14 (RI), aspartate 35, and arginine 82 each bind NAD(+). Residues 153–155 (SCT), threonine 184, 213–214 (TG), and arginine 236 each bind D-glyceraldehyde 3-phosphate. Catalysis depends on cysteine 154, which acts as the Nucleophile. Asparagine 318 contributes to the NAD(+) binding site.

The protein belongs to the glyceraldehyde-3-phosphate dehydrogenase family. As to quaternary structure, homotetramer.

Its subcellular location is the cytoplasm. The catalysed reaction is D-glyceraldehyde 3-phosphate + phosphate + NAD(+) = (2R)-3-phospho-glyceroyl phosphate + NADH + H(+). It functions in the pathway carbohydrate degradation; glycolysis; pyruvate from D-glyceraldehyde 3-phosphate: step 1/5. Functionally, key enzyme in glycolysis that catalyzes the first step of the pathway by converting D-glyceraldehyde 3-phosphate (G3P) into 3-phospho-D-glyceroyl phosphate. Essential for the maintenance of cellular ATP levels and carbohydrate metabolism. This is Glyceraldehyde-3-phosphate dehydrogenase, cytosolic (GAPC) from Craterostigma plantagineum (Blue gem).